A 282-amino-acid polypeptide reads, in one-letter code: ATP synthase gamma chain (282 aa).

Belongs to the ATPase gamma chain family. In terms of assembly, F-type ATPases have 2 components, CF(1) - the catalytic core - and CF(0) - the membrane proton channel. CF(1) has five subunits: alpha(3), beta(3), gamma(1), delta(1), epsilon(1). CF(0) has three main subunits: a, b and c. In this bacterium the a and b subunits are transcribed but do not seem to be translated, thus the ATP synthase consists of the alpha, beta, gamma, delta, epsilon and c subunits.

Its subcellular location is the cell membrane. Produces ATP from ADP in the presence of a proton gradient across the membrane. The gamma chain is believed to be important in regulating ATPase activity and the flow of protons through the CF(0) complex. This Moorella thermoacetica (strain ATCC 39073 / JCM 9320) protein is ATP synthase gamma chain.